Consider the following 220-residue polypeptide: Probable cutinase 5 (220 aa).

A signal peptide spans 1–18 (MVALHTLLLTAFAAVSLA). 2 cysteine pairs are disulfide-bonded: Cys42/Cys121 and Cys68/Cys82. Residue Ser132 is the Nucleophile of the active site. Residues Cys183 and Cys190 are joined by a disulfide bond. Residue Asp187 is part of the active site. His200 functions as the Proton donor/acceptor in the catalytic mechanism.

It belongs to the cutinase family.

It localises to the secreted. It catalyses the reaction cutin + H2O = cutin monomers.. Functionally, catalyzes the hydrolysis of complex carboxylic polyesters found in the cell wall of plants. Degrades cutin, a macromolecule that forms the structure of the plant cuticle. The protein is Probable cutinase 5 of Aspergillus terreus (strain NIH 2624 / FGSC A1156).